The chain runs to 150 residues: Cytochrome c oxidase subunit 5A, mitochondrial (150 aa).

The N-terminal 41 residues, 1–41 (MLGAALRRCAVAATTWAGPRGHLHSARTPGPAAAIQSVRCY), are a transit peptide targeting the mitochondrion. Residues 2–17 (LGAALRRCAVAATTWA) carry the SIFI-degron motif. 2 positions are modified to N6-acetyllysine: Lys87 and Lys113. Thr141 carries the phosphothreonine modification.

Belongs to the cytochrome c oxidase subunit 5A family. In terms of assembly, component of the cytochrome c oxidase (complex IV, CIV), a multisubunit enzyme composed of 14 subunits. The complex is composed of a catalytic core of 3 subunits MT-CO1, MT-CO2 and MT-CO3, encoded in the mitochondrial DNA, and 11 supernumerary subunits COX4I, COX5A, COX5B, COX6A, COX6B, COX6C, COX7A, COX7B, COX7C, COX8 and NDUFA4, which are encoded in the nuclear genome. The complex exists as a monomer or a dimer and forms supercomplexes (SCs) in the inner mitochondrial membrane with NADH-ubiquinone oxidoreductase (complex I, CI) and ubiquinol-cytochrome c oxidoreductase (cytochrome b-c1 complex, complex III, CIII), resulting in different assemblies (supercomplex SCI(1)III(2)IV(1) and megacomplex MCI(2)III(2)IV(2)). Interacts with AFG1L. Interacts with RAB5IF. In terms of processing, in response to mitochondrial stress, the precursor protein is ubiquitinated by the SIFI complex in the cytoplasm before mitochondrial import, leading to its degradation. Within the SIFI complex, UBR4 initiates ubiquitin chain that are further elongated or branched by KCMF1.

The protein localises to the mitochondrion inner membrane. It functions in the pathway energy metabolism; oxidative phosphorylation. Functionally, component of the cytochrome c oxidase, the last enzyme in the mitochondrial electron transport chain which drives oxidative phosphorylation. The respiratory chain contains 3 multisubunit complexes succinate dehydrogenase (complex II, CII), ubiquinol-cytochrome c oxidoreductase (cytochrome b-c1 complex, complex III, CIII) and cytochrome c oxidase (complex IV, CIV), that cooperate to transfer electrons derived from NADH and succinate to molecular oxygen, creating an electrochemical gradient over the inner membrane that drives transmembrane transport and the ATP synthase. Cytochrome c oxidase is the component of the respiratory chain that catalyzes the reduction of oxygen to water. Electrons originating from reduced cytochrome c in the intermembrane space (IMS) are transferred via the dinuclear copper A center (CU(A)) of subunit 2 and heme A of subunit 1 to the active site in subunit 1, a binuclear center (BNC) formed by heme A3 and copper B (CU(B)). The BNC reduces molecular oxygen to 2 water molecules using 4 electrons from cytochrome c in the IMS and 4 protons from the mitochondrial matrix. This chain is Cytochrome c oxidase subunit 5A, mitochondrial (COX5A), found in Symphalangus syndactylus (Siamang).